We begin with the raw amino-acid sequence, 1461 residues long: DNA topoisomerase 2 (1461 aa).

The span at 1-17 (MSESESDYFTDGSEDDF) shows a compositional bias: acidic residues. The interval 1 to 61 (MSESESDYFT…TPKPTNASET (61 aa)) is disordered. A compositionally biased stretch (low complexity) spans 41 to 52 (TNSTVSSSRSST). ATP contacts are provided by residues N120, N149, 177–179 (SSN), and 190–197 (GRNGFGAK). Positions 382-389 (SKKEKGKK) are interaction with DNA. Residue 418–420 (QTK) participates in ATP binding. The 117-residue stretch at 498–614 (CTLILTEGLS…GLLDIPGFLL (117 aa)) folds into the Toprim domain. Mg(2+) is bound by residues E504, D583, and D585. Residues 752 to 1226 (IPSVLDGFKP…SAKDLWNQDL (475 aa)) form the Topo IIA-type catalytic domain. The active-site O-(5'-phospho-DNA)-tyrosine intermediate is the Y842. Residues 1024 to 1033 (KLVSSLSLAN) are interaction with DNA. Disordered regions lie at residues 1122-1155 (DGKP…DVGN) and 1244-1461 (RESL…IVDE). A compositionally biased stretch (acidic residues) spans 1133–1153 (LTGDDADEEEETQEQEGDEDV). The span at 1251-1261 (GKKKSTKRRAK) shows a compositional bias: basic residues. 2 stretches are compositionally biased toward basic and acidic residues: residues 1274–1283 (VKVEPKEKKS) and 1406–1417 (DKPEPKERRTRE). A compositionally biased stretch (acidic residues) spans 1434–1461 (DSDDEDEDEEDDIVMSDGDDDDDFIVDE).

The protein belongs to the type II topoisomerase family. As to quaternary structure, homodimer. Mg(2+) is required as a cofactor. Mn(2+) serves as cofactor. It depends on Ca(2+) as a cofactor.

The protein resides in the nucleus. The enzyme catalyses ATP-dependent breakage, passage and rejoining of double-stranded DNA.. In terms of biological role, control of topological states of DNA by transient breakage and subsequent rejoining of DNA strands. Topoisomerase II makes double-strand breaks. The chain is DNA topoisomerase 2 (TOP2) from Candida albicans (Yeast).